The following is a 517-amino-acid chain: 2,3-bisphosphoglycerate-independent phosphoglycerate mutase (517 aa).

Residues aspartate 14 and serine 64 each contribute to the Mn(2+) site. Serine 64 serves as the catalytic Phosphoserine intermediate. Substrate contacts are provided by residues histidine 125, 155–156, arginine 187, arginine 193, 259–262, and lysine 334; these read RD and RPDR. Aspartate 401, histidine 405, aspartate 442, histidine 443, and histidine 461 together coordinate Mn(2+).

It belongs to the BPG-independent phosphoglycerate mutase family. Monomer. Mn(2+) is required as a cofactor.

It catalyses the reaction (2R)-2-phosphoglycerate = (2R)-3-phosphoglycerate. It participates in carbohydrate degradation; glycolysis; pyruvate from D-glyceraldehyde 3-phosphate: step 3/5. Catalyzes the interconversion of 2-phosphoglycerate and 3-phosphoglycerate. In Symbiobacterium thermophilum (strain DSM 24528 / JCM 14929 / IAM 14863 / T), this protein is 2,3-bisphosphoglycerate-independent phosphoglycerate mutase.